The primary structure comprises 125 residues: Glycine cleavage system H protein (125 aa).

The 83-residue stretch at 22–104 folds into the Lipoyl-binding domain; that stretch reads VATVGITIHA…EGEGWLFKLK (83 aa). Residue Lys-63 is modified to N6-lipoyllysine.

Belongs to the GcvH family. In terms of assembly, the glycine cleavage system is composed of four proteins: P, T, L and H. (R)-lipoate serves as cofactor.

The glycine cleavage system catalyzes the degradation of glycine. The H protein shuttles the methylamine group of glycine from the P protein to the T protein. The sequence is that of Glycine cleavage system H protein from Brucella abortus (strain 2308).